Here is a 164-residue protein sequence, read N- to C-terminus: uncharacterized protein (164 aa).

This is an uncharacterized protein from Methanocaldococcus jannaschii (strain ATCC 43067 / DSM 2661 / JAL-1 / JCM 10045 / NBRC 100440) (Methanococcus jannaschii).